Here is a 608-residue protein sequence, read N- to C-terminus: uncharacterized protein (608 aa).

Residues 4–24 (LIFMALLMSLLFIGTVFGYGD) form a helical membrane-spanning segment.

The protein to M.jannaschii MJ1394 and A.fulgidus AF2028.

The protein resides in the membrane. This is an uncharacterized protein from Methanocaldococcus jannaschii (strain ATCC 43067 / DSM 2661 / JAL-1 / JCM 10045 / NBRC 100440) (Methanococcus jannaschii).